The sequence spans 354 residues: MEAATAPEVAAGSKLKVKEASPADAEPPQASPGQGAGSPTPQLLPPIEEHPKIWLPRALRQTYIRKVGDTVNLLIPFQGKPKPQAIWTHDGCALDTRRVSVRNGEQDSILFIREAQRADSGRYQLRVQLGGLEATATIDILVIERPGPPQSIKLVDVWGFSATLEWTPPQDTGNTALLGYTVQKADTKSGLWFTVLEHYHRTSCIVSDLIIGNSYAFRVFAENQCGLSETAPITTDLAHIQKAATVYKTKGFAQRDFSEAPKFTQPLADCTTVTGYNTQLFCCVRASPRPKIIWLKNKMDIQGNPKYRALTHLGICSLEIRKPGPFDGGIYTCKAVNPLGEASVDCRVDVKVPN.

The disordered stretch occupies residues 1–47 (MEAATAPEVAAGSKLKVKEASPADAEPPQASPGQGAGSPTPQLLPPI). S38 bears the Phosphoserine mark. Residues 45 to 139 (PPIEEHPKIW…GGLEATATID (95 aa)) form the Ig-like C2-type 1 domain. Positions 148–238 (PPQSIKLVDV…ETAPITTDLA (91 aa)) constitute a Fibronectin type-III domain. In terms of domain architecture, Ig-like C2-type 2 spans 261–345 (PKFTQPLADC…VNPLGEASVD (85 aa)). Cysteines 282 and 333 form a disulfide. R321 is modified (omega-N-methylarginine).

It belongs to the immunoglobulin superfamily. MyBP family. In terms of tissue distribution, expressed in heart, with higher expression in the atria. Expressed in left atrium and ventricle, arteria mammaria interna and skeletal muscle. As to expression, expressed specifically en the left atrium.

The protein resides in the cytoplasm. It is found in the myofibril. The protein localises to the sarcomere. In terms of biological role, myosin-binding protein which plays a role in cardiac function. Seems to regulate conduction in the atria and ventricular conduction systems. The protein is Myosin-binding protein H-like of Homo sapiens (Human).